The sequence spans 245 residues: tRNA pseudouridine synthase A 2 (245 aa).

The Nucleophile role is filled by Asp-53. Tyr-111 is a substrate binding site.

Belongs to the tRNA pseudouridine synthase TruA family. As to quaternary structure, homodimer.

The catalysed reaction is uridine(38/39/40) in tRNA = pseudouridine(38/39/40) in tRNA. Its function is as follows. Formation of pseudouridine at positions 38, 39 and 40 in the anticodon stem and loop of transfer RNAs. The chain is tRNA pseudouridine synthase A 2 from Bacillus cereus (strain ATCC 14579 / DSM 31 / CCUG 7414 / JCM 2152 / NBRC 15305 / NCIMB 9373 / NCTC 2599 / NRRL B-3711).